A 201-amino-acid polypeptide reads, in one-letter code: 3-isopropylmalate dehydratase small subunit (201 aa).

It belongs to the LeuD family. LeuD type 1 subfamily. In terms of assembly, heterodimer of LeuC and LeuD.

The enzyme catalyses (2R,3S)-3-isopropylmalate = (2S)-2-isopropylmalate. It functions in the pathway amino-acid biosynthesis; L-leucine biosynthesis; L-leucine from 3-methyl-2-oxobutanoate: step 2/4. Catalyzes the isomerization between 2-isopropylmalate and 3-isopropylmalate, via the formation of 2-isopropylmaleate. This is 3-isopropylmalate dehydratase small subunit from Shewanella denitrificans (strain OS217 / ATCC BAA-1090 / DSM 15013).